Here is a 156-residue protein sequence, read N- to C-terminus: Lipoprotein signal peptidase (156 aa).

3 consecutive transmembrane segments (helical) span residues 5-25 (FKFI…DQWV), 64-84 (YLHL…KTLL), and 89-109 (IAFG…FIHG). Active-site residues include Asp-113 and Asp-130. Residues 122–142 (NFAIFNVADVMINISVALILI) traverse the membrane as a helical segment.

This sequence belongs to the peptidase A8 family.

The protein resides in the cell inner membrane. It carries out the reaction Release of signal peptides from bacterial membrane prolipoproteins. Hydrolyzes -Xaa-Yaa-Zaa-|-(S,diacylglyceryl)Cys-, in which Xaa is hydrophobic (preferably Leu), and Yaa (Ala or Ser) and Zaa (Gly or Ala) have small, neutral side chains.. Its pathway is protein modification; lipoprotein biosynthesis (signal peptide cleavage). Its function is as follows. This protein specifically catalyzes the removal of signal peptides from prolipoproteins. In Campylobacter jejuni subsp. jejuni serotype O:6 (strain 81116 / NCTC 11828), this protein is Lipoprotein signal peptidase.